We begin with the raw amino-acid sequence, 278 residues long: Poly(3-hydroxyoctanoate) depolymerase (278 aa).

A signal peptide spans 1–33 (MPLRTLLCGLLLAVCLGQHALAASRCSERPRTL).

It localises to the secreted. The enzyme catalyses Hydrolyzes the polyester poly{oxycarbonyl[(R)-2-pentylethylene]} to oligomers.. Its function is as follows. Hydrolysis of poly(3-hydroxyoctanoic acid). This is Poly(3-hydroxyoctanoate) depolymerase (phaZ) from Pseudomonas fluorescens.